A 285-amino-acid polypeptide reads, in one-letter code: Shikimate dehydrogenase (NADP(+)) (285 aa).

Shikimate contacts are provided by residues 22–24 and threonine 69; that span reads SMS. Lysine 73 acts as the Proton acceptor in catalysis. Residue aspartate 85 coordinates NADP(+). 2 residues coordinate shikimate: asparagine 94 and aspartate 110. NADP(+) is bound by residues 136–140, 160–165, and methionine 225; these read GAGGA and NRTVAR. Residue tyrosine 227 participates in shikimate binding. Residue glycine 248 coordinates NADP(+).

Belongs to the shikimate dehydrogenase family. As to quaternary structure, homodimer.

The catalysed reaction is shikimate + NADP(+) = 3-dehydroshikimate + NADPH + H(+). It functions in the pathway metabolic intermediate biosynthesis; chorismate biosynthesis; chorismate from D-erythrose 4-phosphate and phosphoenolpyruvate: step 4/7. Functionally, involved in the biosynthesis of the chorismate, which leads to the biosynthesis of aromatic amino acids. Catalyzes the reversible NADPH linked reduction of 3-dehydroshikimate (DHSA) to yield shikimate (SA). In Caulobacter vibrioides (strain ATCC 19089 / CIP 103742 / CB 15) (Caulobacter crescentus), this protein is Shikimate dehydrogenase (NADP(+)).